Reading from the N-terminus, the 412-residue chain is MAGKAAAPGTAVLLVTANVGSLFDDPENLQKNWLREFYQVVHTHKPHFMALHCQEFGGKNYEASMSHVDKFVKELLSSDAMKEYNRARVYLDENFKSQEHFTALGSFYFLHESLKNIYQFDFKAKKYKKVTGKEIYSDTLESTPMLEKEKFPQDYFPECKWSRKGFVRTRWCVADCAFDLVNIHLFHDASNLVAWETSPSVYSGIRHKALGYVLDRIIDQRFEKVSYFVFGDFNFRLDSKSVVETLCTKATMQTVRAADTNEVVKLIFRESDNDRKVMLQLEKKLFHYFNQEVFRDNNGTALLEFDKELSVFKDRLYELDISFPPSYPYSEDSGQGRQYMNTRCPAWCDRVLMSPSARELILKSESEEKVVTYDHIGPNVCMGDHKPVFLAFRIAPGAGKPHAHVHKCCVVQ.

The S-farnesyl cysteine moiety is linked to residue C409. A propeptide spans 410 to 412 (VVQ) (removed in mature form).

Belongs to the inositol 1,4,5-trisphosphate 5-phosphatase type I family. As to quaternary structure, interacts with TASOR. In terms of processing, isoprenylation at Cys-409 is required for localization at the membrane.

The protein resides in the cell membrane. The protein localises to the cell projection. It localises to the dendrite. It catalyses the reaction 1D-myo-inositol 1,4,5-trisphosphate + H2O = 1D-myo-inositol 1,4-bisphosphate + phosphate. The enzyme catalyses 1D-myo-inositol 1,3,4,5-tetrakisphosphate + H2O = 1D-myo-inositol 1,3,4-trisphosphate + phosphate. With respect to regulation, inhibited by EDTA and 2,3-bisphosphoglycerate. Functionally, phosphatase that specifically hydrolyzes the 5-phosphate of inositol 1,4,5-trisphosphate to inositol 1,4-bisphosphate, and inositol 1,3,4,5-tetrasphosphate to inositol 1,3,4-trisphosphate. Plays a crucial role in the survival of cerebellar Purkinje cells. The protein is Inositol polyphosphate-5-phosphatase A (INPP5A) of Canis lupus familiaris (Dog).